Consider the following 470-residue polypeptide: Methylenetetrahydrofolate--tRNA-(uracil-5-)-methyltransferase TrmFO (470 aa).

10–15 lines the FAD pocket; the sequence is GAGLAG.

Belongs to the MnmG family. TrmFO subfamily. Requires FAD as cofactor.

Its subcellular location is the cytoplasm. It carries out the reaction uridine(54) in tRNA + (6R)-5,10-methylene-5,6,7,8-tetrahydrofolate + NADH + H(+) = 5-methyluridine(54) in tRNA + (6S)-5,6,7,8-tetrahydrofolate + NAD(+). The catalysed reaction is uridine(54) in tRNA + (6R)-5,10-methylene-5,6,7,8-tetrahydrofolate + NADPH + H(+) = 5-methyluridine(54) in tRNA + (6S)-5,6,7,8-tetrahydrofolate + NADP(+). Catalyzes the folate-dependent formation of 5-methyl-uridine at position 54 (M-5-U54) in all tRNAs. This Prochlorococcus marinus (strain MIT 9312) protein is Methylenetetrahydrofolate--tRNA-(uracil-5-)-methyltransferase TrmFO.